A 366-amino-acid chain; its full sequence is Cobalt-precorrin-5B C(1)-methyltransferase (366 aa).

It belongs to the CbiD family.

It catalyses the reaction Co-precorrin-5B + S-adenosyl-L-methionine = Co-precorrin-6A + S-adenosyl-L-homocysteine. It functions in the pathway cofactor biosynthesis; adenosylcobalamin biosynthesis; cob(II)yrinate a,c-diamide from sirohydrochlorin (anaerobic route): step 6/10. Catalyzes the methylation of C-1 in cobalt-precorrin-5B to form cobalt-precorrin-6A. The sequence is that of Cobalt-precorrin-5B C(1)-methyltransferase from Pseudomonas aeruginosa (strain LESB58).